A 365-amino-acid polypeptide reads, in one-letter code: Probable 7-methylxanthine methyltransferase 3 (365 aa).

Tyr18 lines the S-adenosyl-L-homocysteine pocket. Thr25 provides a ligand contact to theobromine. S-adenosyl-L-homocysteine-binding residues include Cys62, Gln67, Asp99, Leu100, Ser132, and Phe133. Positions 150, 153, and 154 each coordinate theobromine. Residues Asn170, Phe258, and Asn259 each coordinate Mg(2+). Phe311 contributes to the theobromine binding site.

The protein belongs to the methyltransferase superfamily. Type-7 methyltransferase family. Mg(2+) serves as cofactor.

It catalyses the reaction 7-methylxanthine + S-adenosyl-L-methionine = theobromine + S-adenosyl-L-homocysteine + H(+). It participates in alkaloid biosynthesis. In terms of biological role, involved in the biosynthesis of theobromine. In Theobroma cacao (Cacao), this protein is Probable 7-methylxanthine methyltransferase 3.